The chain runs to 404 residues: Glucose-1-phosphate adenylyltransferase (404 aa).

Alpha-D-glucose 1-phosphate contacts are provided by residues Tyr-99, Gly-164, Glu-179–Lys-180, and Ser-197.

This sequence belongs to the bacterial/plant glucose-1-phosphate adenylyltransferase family.

The catalysed reaction is alpha-D-glucose 1-phosphate + ATP + H(+) = ADP-alpha-D-glucose + diphosphate. Its pathway is capsule biogenesis; capsule polysaccharide biosynthesis. It participates in glycan biosynthesis; glycogen biosynthesis. Functionally, involved in the biosynthesis of ADP-glucose, a building block, required in the biosynthesis of maltose-1-phosphate (M1P) and in the elongation reactions to produce linear alpha-1,4-glucans. Catalyzes the reaction between ATP and alpha-D-glucose 1-phosphate (G1P) to produce pyrophosphate and ADP-Glc. The polypeptide is Glucose-1-phosphate adenylyltransferase (Mycobacteroides abscessus (strain ATCC 19977 / DSM 44196 / CCUG 20993 / CIP 104536 / JCM 13569 / NCTC 13031 / TMC 1543 / L948) (Mycobacterium abscessus)).